Here is a 707-residue protein sequence, read N- to C-terminus: Ribosomal RNA large subunit methyltransferase K/L (707 aa).

The THUMP domain maps to 43 to 154; sequence QIYRCCLWSR…KDKAILGVDM (112 aa).

This sequence belongs to the methyltransferase superfamily. RlmKL family.

It is found in the cytoplasm. The catalysed reaction is guanosine(2445) in 23S rRNA + S-adenosyl-L-methionine = N(2)-methylguanosine(2445) in 23S rRNA + S-adenosyl-L-homocysteine + H(+). It carries out the reaction guanosine(2069) in 23S rRNA + S-adenosyl-L-methionine = N(2)-methylguanosine(2069) in 23S rRNA + S-adenosyl-L-homocysteine + H(+). In terms of biological role, specifically methylates the guanine in position 2445 (m2G2445) and the guanine in position 2069 (m7G2069) of 23S rRNA. This chain is Ribosomal RNA large subunit methyltransferase K/L, found in Vibrio parahaemolyticus serotype O3:K6 (strain RIMD 2210633).